Here is a 98-residue protein sequence, read N- to C-terminus: Large ribosomal subunit protein eL21 (98 aa).

The segment covering 1–24 has biased composition (basic residues); sequence MVKKAHSFRRKTRGKLSKHPRRRG. The tract at residues 1 to 27 is disordered; that stretch reads MVKKAHSFRRKTRGKLSKHPRRRGLPP.

The protein belongs to the eukaryotic ribosomal protein eL21 family. In terms of assembly, part of the 50S ribosomal subunit.

This chain is Large ribosomal subunit protein eL21, found in Thermococcus kodakarensis (strain ATCC BAA-918 / JCM 12380 / KOD1) (Pyrococcus kodakaraensis (strain KOD1)).